Reading from the N-terminus, the 446-residue chain is Glycerol-3-phosphate acyltransferase 3 (446 aa).

3 consecutive transmembrane segments (helical) span residues 11–31, 146–166, and 168–188; these read IFII…MFGS, LRVT…LLPL, and ITLA…VGQL. Positions 236 to 241 match the HXXXXD motif motif; the sequence is HTSPID.

The protein belongs to the 1-acyl-sn-glycerol-3-phosphate acyltransferase family.

The protein resides in the endoplasmic reticulum membrane. The enzyme catalyses sn-glycerol 3-phosphate + an acyl-CoA = a 1-acyl-sn-glycero-3-phosphate + CoA. It catalyses the reaction a 1-acyl-sn-glycero-3-phosphate + an acyl-CoA = a 1,2-diacyl-sn-glycero-3-phosphate + CoA. The catalysed reaction is dodecanoyl-CoA + sn-glycerol 3-phosphate = 1-dodecanoyl-sn-glycerol 3-phosphate + CoA. It carries out the reaction sn-glycerol 3-phosphate + hexadecanoyl-CoA = 1-hexadecanoyl-sn-glycero-3-phosphate + CoA. The enzyme catalyses sn-glycerol 3-phosphate + (9Z)-octadecenoyl-CoA = 1-(9Z-octadecenoyl)-sn-glycero-3-phosphate + CoA. It catalyses the reaction (9Z,12Z)-octadecadienoyl-CoA + sn-glycerol 3-phosphate = 1-(9Z,12Z)-octadecadienoyl-sn-glycero-3-phosphate + CoA. The catalysed reaction is 1-tetradecanoyl-sn-glycerol 3-phosphate + (9Z)-octadecenoyl-CoA = 1-tetradecanoyl-2-(9Z)-octadecenoyl-sn-glycero-3-phosphate + CoA. It carries out the reaction 1-hexadecanoyl-sn-glycero-3-phosphate + (9Z)-octadecenoyl-CoA = 1-hexadecanoyl-2-(9Z-octadecenoyl)-sn-glycero-3-phosphate + CoA. The enzyme catalyses 1-(9Z-octadecenoyl)-sn-glycero-3-phosphate + (9Z)-octadecenoyl-CoA = 1,2-di-(9Z-octadecenoyl)-sn-glycero-3-phosphate + CoA. It catalyses the reaction 1-(6Z,9Z,12Z-octadecatrienoyl)-sn-glycero-3-phosphate + (9Z)-octadecenoyl-CoA = (6Z,9Z,12Z)-octadecatrienoyl-2-(9Z)-octadecenoyl-sn-glycero-3-phosphate + CoA. The catalysed reaction is 1-(9Z,12Z,15Z)-octadecatrienoyl-sn-glycero-3-phosphate + (9Z)-octadecenoyl-CoA = 1-(9Z,12Z,15Z)-octadecatrienoyl-2-(9Z)-octadecenoyl-sn-glycero-3-phosphate + CoA. It carries out the reaction 1-(9Z-octadecenoyl)-sn-glycero-3-phosphate + tetradecanoyl-CoA = 1-(9Z)-octadecenoyl-2-tetradecanoyl-sn-glycero-3-phosphate + CoA. The enzyme catalyses 1-(9Z-octadecenoyl)-sn-glycero-3-phosphate + hexadecanoyl-CoA = 1-(9Z)-octadecenoyl-2-hexadecanoyl-sn-glycero-3-phosphate + CoA. It catalyses the reaction 1-(9Z-octadecenoyl)-sn-glycero-3-phosphate + octadecanoyl-CoA = 1-(9Z-octadecenoyl)-2-octadecanoyl-sn-glycero-3-phosphate + CoA. The catalysed reaction is 1-(9Z-octadecenoyl)-sn-glycero-3-phosphate + (9Z,12Z)-octadecadienoyl-CoA = 1-(9Z)-octadecenoyl-2-(9Z,12Z)-octadecadienoyl-sn-glycero-3-phosphate + CoA. It carries out the reaction 1-(5Z,8Z,11Z,14Z-eicosatetraenoyl)-sn-glycero-3-phosphate + (9Z)-octadecenoyl-CoA = 1-(5Z,8Z,11Z,14Z)-eicosatetraenoyl-2-(9Z)-octadecenoyl-sn-glycero-3-phosphate + CoA. It functions in the pathway glycerolipid metabolism; triacylglycerol biosynthesis. The protein operates within phospholipid metabolism; CDP-diacylglycerol biosynthesis; CDP-diacylglycerol from sn-glycerol 3-phosphate: step 1/3. In terms of biological role, converts glycerol-3-phosphate to 1-acyl-sn-glycerol-3-phosphate (lysophosphatidic acid or LPA) by incorporating an acyl moiety at the sn-1 position of the glycerol backbone. Also converts LPA into 1,2-diacyl-sn-glycerol-3-phosphate (phosphatidic acid or PA) by incorporating an acyl moiety at the sn-2 position of the glycerol backbone. Protects cells against lipotoxicity. In Xenopus laevis (African clawed frog), this protein is Glycerol-3-phosphate acyltransferase 3.